Here is a 211-residue protein sequence, read N- to C-terminus: Uracil phosphoribosyltransferase (211 aa).

Residues R78, R103, and 130–138 each bind 5-phospho-alpha-D-ribose 1-diphosphate; that span reads DPMLATGNS. Uracil is bound by residues I193 and 198–200; that span reads GDA. D199 serves as a coordination point for 5-phospho-alpha-D-ribose 1-diphosphate.

The protein belongs to the UPRTase family. It depends on Mg(2+) as a cofactor.

It catalyses the reaction UMP + diphosphate = 5-phospho-alpha-D-ribose 1-diphosphate + uracil. Its pathway is pyrimidine metabolism; UMP biosynthesis via salvage pathway; UMP from uracil: step 1/1. With respect to regulation, allosterically activated by GTP. In terms of biological role, catalyzes the conversion of uracil and 5-phospho-alpha-D-ribose 1-diphosphate (PRPP) to UMP and diphosphate. In Acinetobacter baumannii (strain ATCC 17978 / DSM 105126 / CIP 53.77 / LMG 1025 / NCDC KC755 / 5377), this protein is Uracil phosphoribosyltransferase.